We begin with the raw amino-acid sequence, 1145 residues long: DNA-directed RNA polymerase subunit beta (1145 aa).

Over residues 1101 to 1112 the composition is skewed to basic and acidic residues; it reads LPEERRVSSSKE. Residues 1101-1145 form a disordered region; it reads LPEERRVSSSKEEIEEEEEVEDNSDEFDETFLEEAEDDFSLDDED. Acidic residues predominate over residues 1113–1145; that stretch reads EIEEEEEVEDNSDEFDETFLEEAEDDFSLDDED.

The protein belongs to the RNA polymerase beta chain family. In terms of assembly, the RNAP catalytic core consists of 2 alpha, 1 beta, 1 beta' and 1 omega subunit. When a sigma factor is associated with the core the holoenzyme is formed, which can initiate transcription.

It carries out the reaction RNA(n) + a ribonucleoside 5'-triphosphate = RNA(n+1) + diphosphate. In terms of biological role, DNA-dependent RNA polymerase catalyzes the transcription of DNA into RNA using the four ribonucleoside triphosphates as substrates. In Desulforamulus reducens (strain ATCC BAA-1160 / DSM 100696 / MI-1) (Desulfotomaculum reducens), this protein is DNA-directed RNA polymerase subunit beta.